A 338-amino-acid polypeptide reads, in one-letter code: Solute carrier family 35 member G6 (338 aa).

The tract at residues 1–25 (MAGSHPYLNPPDSTHPSPPSAPPSL) is disordered. 9 helical membrane-spanning segments follow: residues 40 to 60 (LLVALLGGGLPAGFVGPLSHM), 67 to 87 (LPSLELLICRCLFHLPIALLL), 105 to 125 (YFYALLNVLSIGCAYSAVQVV), 160 to 180 (CGLLGSILGLIIIVGPGLWTL), 190 to 210 (ALGYGQAFVGGLALSLGLLVY), 221 to 241 (TVAFLSGLVGLLGSVPGLFVL), 255 to 275 (CVGAVGILALVSFTCVSYAVT), 281 to 301 (LVCAVLHSEVVVALILQYYML), and 310 to 330 (IVGAGVVLGSIAIITAWNLSC). The region spanning 49 to 174 (LPAGFVGPLS…SILGLIIIVG (126 aa)) is the EamA 1 domain. Residues 272–325 (YAVTKAHPALVCAVLHSEVVVALILQYYMLHETVAPSDIVGAGVVLGSIAIITA) enclose the EamA 2 domain.

It belongs to the SLC35G solute transporter family. In terms of tissue distribution, expressed in placenta and testis.

The protein resides in the membrane. The chain is Solute carrier family 35 member G6 (SLC35G6) from Homo sapiens (Human).